Reading from the N-terminus, the 75-residue chain is uncharacterized protein (75 aa).

The SpoVT-AbrB domain maps to 3-45 (TTVFLSNRSQAVRLPKAVALPENVKRVEVIAVGRTRIITPAGE).

The protein belongs to the VapB family.

This is an uncharacterized protein from Escherichia coli (strain K12).